The following is a 342-amino-acid chain: Oxygen-dependent coproporphyrinogen-III oxidase (342 aa).

Residue Ser107 participates in substrate binding. Positions 111 and 121 each coordinate a divalent metal cation. The active-site Proton donor is the His121. Asn123–Arg125 lines the substrate pocket. The a divalent metal cation site is built by His155 and His185. Positions Tyr277–Glu312 are important for dimerization.

The protein belongs to the aerobic coproporphyrinogen-III oxidase family. Homodimer. Requires a divalent metal cation as cofactor.

Its subcellular location is the cytoplasm. The catalysed reaction is coproporphyrinogen III + O2 + 2 H(+) = protoporphyrinogen IX + 2 CO2 + 2 H2O. The protein operates within porphyrin-containing compound metabolism; protoporphyrin-IX biosynthesis; protoporphyrinogen-IX from coproporphyrinogen-III (O2 route): step 1/1. Its function is as follows. Involved in the heme and chlorophyll biosynthesis. Catalyzes the aerobic oxidative decarboxylation of propionate groups of rings A and B of coproporphyrinogen-III to yield the vinyl groups in protoporphyrinogen-IX. The polypeptide is Oxygen-dependent coproporphyrinogen-III oxidase (Synechococcus sp. (strain ATCC 27144 / PCC 6301 / SAUG 1402/1) (Anacystis nidulans)).